A 65-amino-acid polypeptide reads, in one-letter code: Large ribosomal subunit protein bL35 (65 aa).

This sequence belongs to the bacterial ribosomal protein bL35 family.

In Chromobacterium violaceum (strain ATCC 12472 / DSM 30191 / JCM 1249 / CCUG 213 / NBRC 12614 / NCIMB 9131 / NCTC 9757 / MK), this protein is Large ribosomal subunit protein bL35.